Consider the following 303-residue polypeptide: Mycothiol acetyltransferase (303 aa).

N-acetyltransferase domains lie at 1 to 150 (MALL…RPLD) and 162 to 303 (VTIR…QFGR). E18 provides a ligand contact to 1D-myo-inositol 2-(L-cysteinylamino)-2-deoxy-alpha-D-glucopyranoside. Residue 77 to 79 (LAV) coordinates acetyl-CoA. The 1D-myo-inositol 2-(L-cysteinylamino)-2-deoxy-alpha-D-glucopyranoside site is built by E189, K229, and E237. Acetyl-CoA-binding positions include 241 to 243 (VGV) and 248 to 254 (QGNGLGR). 1D-myo-inositol 2-(L-cysteinylamino)-2-deoxy-alpha-D-glucopyranoside is bound at residue Y275. 280 to 285 (NTAAIK) contacts acetyl-CoA.

This sequence belongs to the acetyltransferase family. MshD subfamily. As to quaternary structure, monomer.

The enzyme catalyses 1D-myo-inositol 2-(L-cysteinylamino)-2-deoxy-alpha-D-glucopyranoside + acetyl-CoA = mycothiol + CoA + H(+). In terms of biological role, catalyzes the transfer of acetyl from acetyl-CoA to desacetylmycothiol (Cys-GlcN-Ins) to form mycothiol. This is Mycothiol acetyltransferase from Saccharopolyspora erythraea (strain ATCC 11635 / DSM 40517 / JCM 4748 / NBRC 13426 / NCIMB 8594 / NRRL 2338).